Reading from the N-terminus, the 321-residue chain is MEIDLDSIITRLLEPRTTKPGKLVDLAEEEIRYLTVQATEIFINQPILLELEAPIKICGDIHGQYYDLLRLFEYGGFPPQSNYLFLGDYVDRGKQSLETICLLLAYKIKYPENFFILRGNHECASINRIYGFYDECKRRYNSKLWKAFTDCFNCLPVAAIIDEKIFCMHGGLSPDLKNMDQIRRITRPTVVPDFGLLCDLLWADPDKNIQGWEDNDRGVSYTFGADVVESFLKKHDLDLVCRAHQVVEDGYEFFAKRQLVTLFSAPNYFGEFDNAGAMMGVDETLMCSFQILKPADKKKLTNDSNGRPLTPPRNKQQKPKK.

Residues Asp-60, His-62, Asp-88, and Asn-120 each contribute to the Mn(2+) site. The active-site Proton donor is His-121. Residues His-169 and His-244 each contribute to the Mn(2+) site. The interval 298 to 321 (KKLTNDSNGRPLTPPRNKQQKPKK) is disordered.

This sequence belongs to the PPP phosphatase family. As to quaternary structure, interacts with dpiA. It depends on Mn(2+) as a cofactor.

It catalyses the reaction O-phospho-L-seryl-[protein] + H2O = L-seryl-[protein] + phosphate. The enzyme catalyses O-phospho-L-threonyl-[protein] + H2O = L-threonyl-[protein] + phosphate. Its activity is regulated as follows. Inhibited by okadaic acid, tautomycin and calyculin A. Inhibited by phosphatase inhibitor 2 (dpiA). Protein phosphatase activity in vitro. This is Serine/threonine-protein phosphatase PP1 (pppB) from Dictyostelium discoideum (Social amoeba).